Here is a 454-residue protein sequence, read N- to C-terminus: tRNA modification GTPase MnmE (454 aa).

Residues Arg23, Glu80, and Lys120 each coordinate (6S)-5-formyl-5,6,7,8-tetrahydrofolate. A TrmE-type G domain is found at 216 to 377 (GMKVVIAGRP…LRDHLKQSMG (162 aa)). Asn226 contributes to the K(+) binding site. GTP contacts are provided by residues 226–231 (NAGKSS), 245–251 (TDIAGTT), 270–273 (DTAG), 335–338 (NKAD), and 358–360 (SAR). Ser230 lines the Mg(2+) pocket. Residues Thr245, Ile247, and Thr250 each contribute to the K(+) site. Position 251 (Thr251) interacts with Mg(2+). Residue Lys454 participates in (6S)-5-formyl-5,6,7,8-tetrahydrofolate binding.

Belongs to the TRAFAC class TrmE-Era-EngA-EngB-Septin-like GTPase superfamily. TrmE GTPase family. As to quaternary structure, homodimer. Heterotetramer of two MnmE and two MnmG subunits. K(+) is required as a cofactor.

It is found in the cytoplasm. Functionally, exhibits a very high intrinsic GTPase hydrolysis rate. Involved in the addition of a carboxymethylaminomethyl (cmnm) group at the wobble position (U34) of certain tRNAs, forming tRNA-cmnm(5)s(2)U34. In Serratia proteamaculans (strain 568), this protein is tRNA modification GTPase MnmE.